The primary structure comprises 274 residues: tRNA-cytidine(32) 2-sulfurtransferase (274 aa).

The PP-loop motif signature appears at Ser40–Ser45. 3 residues coordinate [4Fe-4S] cluster: Cys115, Cys118, and Cys206.

This sequence belongs to the TtcA family. As to quaternary structure, homodimer. Mg(2+) is required as a cofactor. [4Fe-4S] cluster serves as cofactor.

It localises to the cytoplasm. It carries out the reaction cytidine(32) in tRNA + S-sulfanyl-L-cysteinyl-[cysteine desulfurase] + AH2 + ATP = 2-thiocytidine(32) in tRNA + L-cysteinyl-[cysteine desulfurase] + A + AMP + diphosphate + H(+). Its pathway is tRNA modification. Functionally, catalyzes the ATP-dependent 2-thiolation of cytidine in position 32 of tRNA, to form 2-thiocytidine (s(2)C32). The sulfur atoms are provided by the cysteine/cysteine desulfurase (IscS) system. In Pseudomonas entomophila (strain L48), this protein is tRNA-cytidine(32) 2-sulfurtransferase.